The primary structure comprises 392 residues: Heat-inducible transcription repressor HrcA (392 aa).

It belongs to the HrcA family.

Its function is as follows. Negative regulator of class I heat shock genes (grpE-dnaK-dnaJ and groELS operons). Prevents heat-shock induction of these operons. In Chlamydia trachomatis serovar L2 (strain ATCC VR-902B / DSM 19102 / 434/Bu), this protein is Heat-inducible transcription repressor HrcA.